The sequence spans 1342 residues: DNA-directed RNA polymerase subunit beta (1342 aa).

Belongs to the RNA polymerase beta chain family. As to quaternary structure, the RNAP catalytic core consists of 2 alpha, 1 beta, 1 beta' and 1 omega subunit. When a sigma factor is associated with the core the holoenzyme is formed, which can initiate transcription.

The catalysed reaction is RNA(n) + a ribonucleoside 5'-triphosphate = RNA(n+1) + diphosphate. DNA-dependent RNA polymerase catalyzes the transcription of DNA into RNA using the four ribonucleoside triphosphates as substrates. This chain is DNA-directed RNA polymerase subunit beta, found in Salmonella typhimurium (strain LT2 / SGSC1412 / ATCC 700720).